A 232-amino-acid chain; its full sequence is Large ribosomal subunit protein uL1 (232 aa).

The protein belongs to the universal ribosomal protein uL1 family. In terms of assembly, part of the 50S ribosomal subunit.

Its function is as follows. Binds directly to 23S rRNA. The L1 stalk is quite mobile in the ribosome, and is involved in E site tRNA release. Functionally, protein L1 is also a translational repressor protein, it controls the translation of the L11 operon by binding to its mRNA. This chain is Large ribosomal subunit protein uL1, found in Xanthomonas campestris pv. campestris (strain B100).